The sequence spans 303 residues: MRGLGLTLAAACAAWLAWWAWPDGAHSEAAAARQAARGGFAPSLIGTRPDGAAAEADGKLVVDQQLRQLFDYYLATLGERDLAVIRTELQGQLKRSLKNGPLAQAMGLFDRYVGYKRSLAGKAAAAATDLSHRLELVQAARRQYFSQAELDGLFGDEDRYDNFTARRLAIEANPALSVDEKRRRVAQLEQQLPPGLRAAREEPVKHLALADAEARLRQGGGGEQQLYQLRAGMVGQAAADRLGELDREQAAWQNRVDDFKRERTAILADGGLSAQQRQQALARLQAQRFSQQESLRLPAYLSN.

A helical membrane pass occupies residues 7-23; the sequence is TLAAACAAWLAWWAWPD.

This sequence belongs to the lipase chaperone family.

The protein resides in the cell inner membrane. Functionally, may be involved in the folding of the extracellular lipase during its passage through the periplasm. The sequence is that of Lipase chaperone (lifO) from Chromobacterium violaceum (strain ATCC 12472 / DSM 30191 / JCM 1249 / CCUG 213 / NBRC 12614 / NCIMB 9131 / NCTC 9757 / MK).